The chain runs to 147 residues: MRDNTIGSLIWLRLIRFTNQSNQLSNEFLKRFDLTTAQFDVLLQIRTYQPLTQMELAEKVTVTQGGISRMLTRLEKEGYIVRKQDWKTKTISLTEQGEAALERALPEQLAFQSSFFDDVLNEEEQKILYELMTKVHKHSEKKELPQE.

Residues 1–137 form the HTH marR-type domain; sequence MRDNTIGSLI…LYELMTKVHK (137 aa). A DNA-binding region (H-T-H motif) is located at residues 53–76; sequence QMELAEKVTVTQGGISRMLTRLEK.

This is an uncharacterized protein from Bacillus cereus (strain ATCC 14579 / DSM 31 / CCUG 7414 / JCM 2152 / NBRC 15305 / NCIMB 9373 / NCTC 2599 / NRRL B-3711).